A 624-amino-acid chain; its full sequence is Pentatricopeptide repeat-containing protein At2g32630 (624 aa).

PPR repeat units lie at residues 153 to 187 (FEKFFDLVFRVYVDNGMFEEGLRVFDYMVKKGLSI), 188 to 222 (DERSCIVFLVAAKKRRRIDLCLEIFRRMVDSGVKI), 223 to 257 (TVYSLTIVVEGLCRRGEVEKSKKLIKEFSVKGIKP), 258 to 292 (EAYTYNTIINAYVKQRDFSGVEGVLKVMKKDGVVY), 293 to 327 (NKVTYTLLMELSVKNGKMSDAEKLFDEMRERGIES), 328 to 362 (DVHVYTSLISWNCRKGNMKRAFLLFDELTEKGLSP), 363 to 397 (SSYTYGALIDGVCKVGEMGAAEILMNEMQSKGVNI), 398 to 432 (TQVVFNTLIDGYCRKGMVDEASMIYDVMEQKGFQA), 433 to 467 (DVFTCNTIASCFNRLKRYDEAKQWLFRMMEGGVKL), 468 to 502 (STVSYTNLIDVYCKEGNVEEAKRLFVEMSSKGVQP), 503 to 537 (NAITYNVMIYAYCKQGKIKEARKLRANMEANGMDP), 538 to 572 (DSYTYTSLIHGECIADNVDEAMRLFSEMGLKGLDQ), and 573 to 607 (NSVTYTVMISGLSKAGKSDEAFGLYDEMKRKGYTI).

This sequence belongs to the PPR family. P subfamily.

The sequence is that of Pentatricopeptide repeat-containing protein At2g32630 from Arabidopsis thaliana (Mouse-ear cress).